The following is a 357-amino-acid chain: sn-glycerol-3-phosphate import ATP-binding protein UgpC (357 aa).

One can recognise an ABC transporter domain in the interval leucine 4–isoleucine 235. Glycine 37 to serine 44 contributes to the ATP binding site.

This sequence belongs to the ABC transporter superfamily. sn-glycerol-3-phosphate importer (TC 3.A.1.1.3) family. As to quaternary structure, the complex is composed of two ATP-binding proteins (UgpC), two transmembrane proteins (UgpA and UgpE) and a solute-binding protein (UgpB).

Its subcellular location is the cell inner membrane. The enzyme catalyses sn-glycerol 3-phosphate(out) + ATP + H2O = sn-glycerol 3-phosphate(in) + ADP + phosphate + H(+). Part of the ABC transporter complex UgpBAEC involved in sn-glycerol-3-phosphate (G3P) import. Responsible for energy coupling to the transport system. In Yersinia pseudotuberculosis serotype I (strain IP32953), this protein is sn-glycerol-3-phosphate import ATP-binding protein UgpC.